A 185-amino-acid chain; its full sequence is Ribosome-recycling factor (185 aa).

The protein belongs to the RRF family.

Its subcellular location is the cytoplasm. Functionally, responsible for the release of ribosomes from messenger RNA at the termination of protein biosynthesis. May increase the efficiency of translation by recycling ribosomes from one round of translation to another. The protein is Ribosome-recycling factor of Rhodococcus erythropolis (strain PR4 / NBRC 100887).